We begin with the raw amino-acid sequence, 300 residues long: GTPase Era (300 aa).

One can recognise an Era-type G domain in the interval 4 to 172 (KSGFVALAGK…LEKIKEELPE (169 aa)). The G1 stretch occupies residues 12–19 (GKPNVGKS). 12–19 (GKPNVGKS) lines the GTP pocket. The interval 38-42 (QTTRN) is G2. The interval 59–62 (DTPG) is G3. Residues 59–63 (DTPGI) and 121–124 (NKID) contribute to the GTP site. The G4 stretch occupies residues 121 to 124 (NKID). The segment at 151 to 153 (ISA) is G5. In terms of domain architecture, KH type-2 spans 195-280 (IREKIFHLTR…YLDLNVKVKE (86 aa)).

Belongs to the TRAFAC class TrmE-Era-EngA-EngB-Septin-like GTPase superfamily. Era GTPase family. Monomer.

The protein localises to the cytoplasm. It is found in the cell inner membrane. Functionally, an essential GTPase that binds both GDP and GTP, with rapid nucleotide exchange. Plays a role in 16S rRNA processing and 30S ribosomal subunit biogenesis and possibly also in cell cycle regulation and energy metabolism. The polypeptide is GTPase Era (Thermotoga petrophila (strain ATCC BAA-488 / DSM 13995 / JCM 10881 / RKU-1)).